We begin with the raw amino-acid sequence, 152 residues long: SsrA-binding protein (152 aa).

It belongs to the SmpB family.

It is found in the cytoplasm. Its function is as follows. Required for rescue of stalled ribosomes mediated by trans-translation. Binds to transfer-messenger RNA (tmRNA), required for stable association of tmRNA with ribosomes. tmRNA and SmpB together mimic tRNA shape, replacing the anticodon stem-loop with SmpB. tmRNA is encoded by the ssrA gene; the 2 termini fold to resemble tRNA(Ala) and it encodes a 'tag peptide', a short internal open reading frame. During trans-translation Ala-aminoacylated tmRNA acts like a tRNA, entering the A-site of stalled ribosomes, displacing the stalled mRNA. The ribosome then switches to translate the ORF on the tmRNA; the nascent peptide is terminated with the 'tag peptide' encoded by the tmRNA and targeted for degradation. The ribosome is freed to recommence translation, which seems to be the essential function of trans-translation. In Rickettsia typhi (strain ATCC VR-144 / Wilmington), this protein is SsrA-binding protein.